Reading from the N-terminus, the 627-residue chain is MDRKQKQAEKARPYGLLKPAALGKIPGRFQLHQEALPHLPVPPLQQTLDRYLLALQPIISEEELNHTQELVAEFRKPGGVGERLQKGLERRAKKTDNWLSDWWLKTAYLEYRLPVVVHSSPGVVLPKQDFQDRQGQLRFAAKLIEGILDFKTMIDNETLPVEYMGGKPLCMNQYYQILSSCRIPGPKRDSIVNYAKGKKQSRHITVVHNFQFFELDVYNSDGSPLTTDQLFIQLEKIWNTSLQTNKEPVGILTTNHRNSWAKAYNNLLKDKTNKESVRTIEKSICTICLDAPMPRVSDDIYKSPVAAQMLHGGGSRWNSGNRWFDKTLQFIIAEDGSCGLVYEHAPAEGPPIVALLDHIVEYTKKPELVRSPMIPLPMPKKLRFNITPEIKSDIEKAKQNLNIMVEDLDVIVLVFHQFGKNYPKSEKISPDAFIQLALQLAYYRMYGHSCATYESASLRMFRLGRTDTIRSTSIESHKFVQSMDSPDKSDQEKADLLRRATQAHKEYTNMAIQGNAIDRHLLGLKLQAIEDLVSIPELFMDTAYAVAMHFNLSTSQVPAKTDCVMCFGPVVPDGYGICYNPMGEHINFAISAFNSCADTNAARMAHYLEKALLDMRSLLQSAPKSKL.

Positions 1-30 (MDRKQKQAEKARPYGLLKPAALGKIPGRFQ) are excised as a propeptide. Residue Lys-94 is modified to N6-succinyllysine. Lys-262 carries the N6-acetyllysine; alternate modification. At Lys-262 the chain carries N6-succinyllysine; alternate. The residue at position 269 (Lys-269) is an N6-acetyllysine. The active-site Proton acceptor is His-344. CoA is bound by residues Lys-420 and 424–431 (KSEKISPD). The (R)-carnitine site is built by Tyr-453 and Ser-455. Ser-457 provides a ligand contact to CoA. Thr-466 is a (R)-carnitine binding site. Residue Gln-556 participates in CoA binding. The Microbody targeting signal signature appears at 625-627 (SKL).

This sequence belongs to the carnitine/choline acetyltransferase family. Monomer.

Its subcellular location is the endoplasmic reticulum. It is found in the peroxisome. The protein localises to the mitochondrion inner membrane. It catalyses the reaction (R)-carnitine + acetyl-CoA = O-acetyl-(R)-carnitine + CoA. It carries out the reaction propanoyl-CoA + (R)-carnitine = O-propanoyl-(R)-carnitine + CoA. The catalysed reaction is butanoyl-CoA + (R)-carnitine = O-butanoyl-(R)-carnitine + CoA. The enzyme catalyses hexanoyl-CoA + (R)-carnitine = O-hexanoyl-(R)-carnitine + CoA. It catalyses the reaction octanoyl-CoA + (R)-carnitine = O-octanoyl-(R)-carnitine + CoA. It carries out the reaction decanoyl-CoA + (R)-carnitine = O-decanoyl-(R)-carnitine + CoA. The catalysed reaction is 3-methylbutanoyl-CoA + (R)-carnitine = O-3-methylbutanoyl-(R)-carnitine + CoA. The enzyme catalyses 2-methylpropanoyl-CoA + (R)-carnitine = O-isobutanoyl-(R)-carnitine + CoA. It catalyses the reaction 2-methylbutanoyl-CoA + (R)-carnitine = O-2-methylbutanoyl-(R)-carnitine + CoA. It carries out the reaction acetoacetyl-CoA + (R)-carnitine = O-3-oxobutanoyl-(R)-carnitine + CoA. The catalysed reaction is 3-hydroxybutanoyl-CoA + (R)-carnitine = O-3-hydroxybutanoyl-(R)-carnitine + CoA. The enzyme catalyses 4,8-dimethylnonanoyl-CoA + (R)-carnitine = O-4,8-dimethylnonanoyl-(R)-carnitine + CoA. It catalyses the reaction 2,6-dimethylheptanoyl-CoA + (R)-carnitine = O-2,6-dimethylheptanoyl-(R)-carnitine + CoA. Its function is as follows. Catalyzes the reversible transfer of acyl groups from carnitine to coenzyme A (CoA) and regulates the acyl-CoA/CoA ratio. Also plays a crucial role in the transport of fatty acids for beta-oxidation. Responsible for the synthesis of short- and branched-chain acylcarnitines. Active towards some branched-chain amino acid oxidation pathway (BCAAO) intermediates. Trans-2-enoyl-CoAs and 2-methylacyl-CoAs are poor substrates. This chain is Carnitine O-acetyltransferase (CRAT), found in Columba livia (Rock dove).